Reading from the N-terminus, the 150-residue chain is Catabolic 3-dehydroquinase 1 (150 aa).

Residue tyrosine 24 is the Proton acceptor of the active site. Asparagine 75, histidine 81, and aspartate 88 together coordinate substrate. Catalysis depends on histidine 101, which acts as the Proton donor. Substrate contacts are provided by residues 102 to 103 (VS) and arginine 112.

This sequence belongs to the type-II 3-dehydroquinase family. In terms of assembly, homododecamer. Adopts a ring-like structure, composed of an arrangement of two hexameric rings stacked on top of one another.

The catalysed reaction is 3-dehydroquinate = 3-dehydroshikimate + H2O. It functions in the pathway aromatic compound metabolism; 3,4-dihydroxybenzoate biosynthesis; 3,4-dihydroxybenzoate from 3-dehydroquinate: step 1/2. In terms of biological role, is involved in the catabolism of quinate. Allows the utilization of quinate as carbon source via the beta-ketoadipate pathway. In Neosartorya fischeri (strain ATCC 1020 / DSM 3700 / CBS 544.65 / FGSC A1164 / JCM 1740 / NRRL 181 / WB 181) (Aspergillus fischerianus), this protein is Catabolic 3-dehydroquinase 1.